Reading from the N-terminus, the 270-residue chain is 4-hydroxy-tetrahydrodipicolinate reductase (270 aa).

Residues 11–16 (GAGGRM) and Glu37 each bind NAD(+). Arg38 is a binding site for NADP(+). NAD(+) is bound by residues 101-103 (GTT) and 125-128 (APNM). The active-site Proton donor/acceptor is His158. Position 159 (His159) interacts with (S)-2,3,4,5-tetrahydrodipicolinate. Lys162 (proton donor) is an active-site residue. (S)-2,3,4,5-tetrahydrodipicolinate is bound at residue 168 to 169 (GT).

The protein belongs to the DapB family.

It is found in the cytoplasm. The enzyme catalyses (S)-2,3,4,5-tetrahydrodipicolinate + NAD(+) + H2O = (2S,4S)-4-hydroxy-2,3,4,5-tetrahydrodipicolinate + NADH + H(+). It carries out the reaction (S)-2,3,4,5-tetrahydrodipicolinate + NADP(+) + H2O = (2S,4S)-4-hydroxy-2,3,4,5-tetrahydrodipicolinate + NADPH + H(+). Its pathway is amino-acid biosynthesis; L-lysine biosynthesis via DAP pathway; (S)-tetrahydrodipicolinate from L-aspartate: step 4/4. Functionally, catalyzes the conversion of 4-hydroxy-tetrahydrodipicolinate (HTPA) to tetrahydrodipicolinate. In Shewanella oneidensis (strain ATCC 700550 / JCM 31522 / CIP 106686 / LMG 19005 / NCIMB 14063 / MR-1), this protein is 4-hydroxy-tetrahydrodipicolinate reductase.